We begin with the raw amino-acid sequence, 500 residues long: MQTLLCQPCKSLPILTASSSSSLIRSSGDVRECIDFRASEKVSKFQFHVTLSPFAFRGFSICREFAVRGAYGIRFCSREDVSGVGNGGIVAEEEIELLNKPNPLPKSENEESGKADDDAILEPFLKFFKPEEEGEGIESEVSDETDRVSVEYYDPKPGDFVVGVVVSGNENKLDVNIGADMLGTMLTKEILPLYDKELDYLLCDLKYDAEEFLVNGKMGIVKDDDEGVEIAEFARQGRPVVEIGTVVFAEVLGRTLSGRPLLSSRRYFRRIAWHRVRQIKQLNEPIEVKITEWNTGGLLTRIEGLRAFIPKQELVKKVNTFTELKENVGRRFLVQITRLNEDKNDLILSEKVAWEKLYLREGTLLEGTVVKILPYGAQVKLGDSSRSGLLHISNITRRRIGSVSDVLQVDESVKVLVVKSLFPDKISLSIADLESEPGLFISDREKVFTEAEEMAKKYREKMPLVATSPISDRPPITSSFPQGKDEEIYANWEWFKFESQ.

A chloroplast-targeting transit peptide spans 1-63 (MQTLLCQPCK…FAFRGFSICR (63 aa)). S1 motif domains follow at residues 156–265 (KPGD…LSSR), 283–351 (NEPI…LSEK), and 362–431 (GTLL…LSIA).

This sequence belongs to the bacterial ribosomal protein bS1 family. In terms of assembly, interacts with CRP1 and PRFB3. As to expression, present in leaves (at protein level). Confined to leaf chlorenchyma cells.

It is found in the plastid. The protein resides in the chloroplast. Functionally, RNA-binding protein that acts as an RNA chaperone to remodel RNA structure and activates their translation. Required for seed pigmentation. Necessary for chloroplast development and subsequent photosynthetic electron flow, as well as for non-photochemical quenching (NPQ). Rubisco regulatory factor which regulates the concerted biogenesis of NDH, PSI (including PsaA, PsaB, PsaD, PsaF, PsaL, PsaG, PsaK and NdhH) and Cytb(6)f (including PetA, PetB, PetC and PetD) complexes. Binds specifically to and involved in the post-transcriptional regulation of plastid-encoded mRNAs (e.g. rbcL, petA, petB, petD and Ycf1), thus modulating expression, cellular localization/compartmentalization, and photosynthetic function. The polypeptide is Protein PIGMENT DEFECTIVE 338, chloroplastic (Arabidopsis thaliana (Mouse-ear cress)).